Here is a 493-residue protein sequence, read N- to C-terminus: Cysteine sulfinic acid decarboxylase (493 aa).

The residue at position 305 (Lys-305) is an N6-(pyridoxal phosphate)lysine.

It belongs to the group II decarboxylase family. As to quaternary structure, homodimer. Pyridoxal 5'-phosphate is required as a cofactor. As to expression, expressed in liver and brain. Also expressed in both astrocytes and neurons, but lower levels are expressed in astrocytes.

It carries out the reaction L-aspartate + H(+) = beta-alanine + CO2. The catalysed reaction is 3-sulfino-L-alanine + H(+) = hypotaurine + CO2. The enzyme catalyses L-cysteate + H(+) = taurine + CO2. Its pathway is organosulfur biosynthesis; taurine biosynthesis; hypotaurine from L-cysteine: step 2/2. Catalyzes the decarboxylation of L-aspartate, 3-sulfino-L-alanine (cysteine sulfinic acid), and L-cysteate to beta-alanine, hypotaurine and taurine, respectively. The preferred substrate is 3-sulfino-L-alanine. Does not exhibit any decarboxylation activity toward glutamate. The sequence is that of Cysteine sulfinic acid decarboxylase (CSAD) from Homo sapiens (Human).